The following is a 113-amino-acid chain: U11-theraphotoxin-Hhn1a (113 aa).

Positions 1–21 are cleaved as a signal peptide; that stretch reads MNTVRVTFLLVFVLAVSLGQA. Residues 22 to 74 constitute a propeptide that is removed on maturation; the sequence is DKDENRMEVQEKTEQGKSYLDFAENLLLQKLEELEAKLLEEDSEESRNSRQKR. Residues 61-83 are disordered; that stretch reads EEDSEESRNSRQKRCIGEGVPCD. 3 cysteine pairs are disulfide-bonded: C75-C90, C82-C95, and C89-C110.

This sequence belongs to the neurotoxin 14 (magi-1) family. 01 (HNTX-16) subfamily. In terms of tissue distribution, expressed by the venom gland.

The protein resides in the secreted. In terms of biological role, probable ion channel inhibitor. The chain is U11-theraphotoxin-Hhn1a from Cyriopagopus hainanus (Chinese bird spider).